Consider the following 445-residue polypeptide: Gamma-glutamyl phosphate reductase (445 aa).

The protein belongs to the gamma-glutamyl phosphate reductase family.

The protein resides in the cytoplasm. The catalysed reaction is L-glutamate 5-semialdehyde + phosphate + NADP(+) = L-glutamyl 5-phosphate + NADPH + H(+). It participates in amino-acid biosynthesis; L-proline biosynthesis; L-glutamate 5-semialdehyde from L-glutamate: step 2/2. Its function is as follows. Catalyzes the NADPH-dependent reduction of L-glutamate 5-phosphate into L-glutamate 5-semialdehyde and phosphate. The product spontaneously undergoes cyclization to form 1-pyrroline-5-carboxylate. This Persephonella marina (strain DSM 14350 / EX-H1) protein is Gamma-glutamyl phosphate reductase.